We begin with the raw amino-acid sequence, 39 residues long: Potassium channel toxin alpha-KTx 2.1 (39 aa).

Intrachain disulfides connect cysteine 7–cysteine 29, cysteine 13–cysteine 34, and cysteine 17–cysteine 36. The interval 26–34 is interaction with Ca(2+)-activated K(+) channels; the sequence is GAKCMNGKC. The residue at position 39 (asparagine 39) is an Asparagine amide.

The protein belongs to the short scorpion toxin superfamily. Potassium channel inhibitor family. Alpha-KTx 02 subfamily. In terms of tissue distribution, expressed by the venom gland.

It is found in the secreted. Functionally, blocks voltage-gated potassium channels (mKv1.1/KCNA1 (Kd&gt;25 nM), rKv1.2/KCNA2 (Kd=2 nM), mKv1.3/KCNA3 (Kd=1 nM), hKv1.5/KCNA5 (Kd&gt;25 nM) and mKv3.1/KCNC1 (Kd&gt;25 nM)) and calcium-activated potassium channels (KCa1.1/KCNMA1 and KCa3.1/KCNN4, Kd&gt;25 nM). The chain is Potassium channel toxin alpha-KTx 2.1 from Centruroides noxius (Mexican scorpion).